Here is a 412-residue protein sequence, read N- to C-terminus: Tryptophan synthase beta chain 1 (412 aa).

At Lys103 the chain carries N6-(pyridoxal phosphate)lysine.

This sequence belongs to the TrpB family. As to quaternary structure, tetramer of two alpha and two beta chains. Pyridoxal 5'-phosphate is required as a cofactor.

The catalysed reaction is (1S,2R)-1-C-(indol-3-yl)glycerol 3-phosphate + L-serine = D-glyceraldehyde 3-phosphate + L-tryptophan + H2O. It functions in the pathway amino-acid biosynthesis; L-tryptophan biosynthesis; L-tryptophan from chorismate: step 5/5. In terms of biological role, the beta subunit is responsible for the synthesis of L-tryptophan from indole and L-serine. This Chlamydia caviae (strain ATCC VR-813 / DSM 19441 / 03DC25 / GPIC) (Chlamydophila caviae) protein is Tryptophan synthase beta chain 1 (trpB1).